Here is a 147-residue protein sequence, read N- to C-terminus: UPF0306 protein YhbP (147 aa).

It belongs to the UPF0306 family.

This Escherichia coli O157:H7 (strain EC4115 / EHEC) protein is UPF0306 protein YhbP.